The primary structure comprises 284 residues: RNase adapter protein RapZ (284 aa).

Residue 8–15 coordinates ATP; sequence GRSGSGKS. 56–59 contributes to the GTP binding site; sequence DVRN. The RNA-binding stretch occupies residues 266–284; that stretch reads RSRGKNVQSRHRTLEKRKP.

It belongs to the RapZ-like family. RapZ subfamily. Homotrimer.

Functionally, modulates the synthesis of GlmS, by affecting the processing and stability of the regulatory small RNA GlmZ. When glucosamine-6-phosphate (GlcN6P) concentrations are high in the cell, RapZ binds GlmZ and targets it to cleavage by RNase E. Consequently, GlmZ is inactivated and unable to activate GlmS synthesis. Under low GlcN6P concentrations, RapZ is sequestered and inactivated by an other regulatory small RNA, GlmY, preventing GlmZ degradation and leading to synthesis of GlmS. The sequence is that of RNase adapter protein RapZ from Shigella boydii serotype 18 (strain CDC 3083-94 / BS512).